A 156-amino-acid chain; its full sequence is ATP synthase subunit b (156 aa).

Residues 11-31 (LIAFVVFVIFCMKYVWPPIIG) form a helical membrane-spanning segment.

It belongs to the ATPase B chain family. As to quaternary structure, F-type ATPases have 2 components, F(1) - the catalytic core - and F(0) - the membrane proton channel. F(1) has five subunits: alpha(3), beta(3), gamma(1), delta(1), epsilon(1). F(0) has three main subunits: a(1), b(2) and c(10-14). The alpha and beta chains form an alternating ring which encloses part of the gamma chain. F(1) is attached to F(0) by a central stalk formed by the gamma and epsilon chains, while a peripheral stalk is formed by the delta and b chains.

The protein resides in the cell inner membrane. Its function is as follows. F(1)F(0) ATP synthase produces ATP from ADP in the presence of a proton or sodium gradient. F-type ATPases consist of two structural domains, F(1) containing the extramembraneous catalytic core and F(0) containing the membrane proton channel, linked together by a central stalk and a peripheral stalk. During catalysis, ATP synthesis in the catalytic domain of F(1) is coupled via a rotary mechanism of the central stalk subunits to proton translocation. In terms of biological role, component of the F(0) channel, it forms part of the peripheral stalk, linking F(1) to F(0). This is ATP synthase subunit b from Colwellia psychrerythraea (strain 34H / ATCC BAA-681) (Vibrio psychroerythus).